We begin with the raw amino-acid sequence, 303 residues long: MIKQRTLKNTIRATGVGLHSGEKVYLTLKPAPVDTGIVFRRADLDPVVEIPARAANVGETTMSTTLVNGDVKVDTVEHLLSAMAGLGIDNAYVELSASEVPIMDGSAGPFVFLIQSAGLEEQDAAKKFIRILREVTVEEGDKRATFLPFEGFKVSFEIDFDHPVLRNRTQSASVDFSSTSFVKEVSRARTFGFMRDIEYLRKHNLALGGSVENAIVVDEDGVLNEDGLRYEDEFVKHKILDAIGDLYLLGNSLIGEFKGYKSGHALNNQLLRKLIAETDAWEVVTFEDASTAPISYMRPVAAV.

Positions 78, 237, and 241 each coordinate Zn(2+). The active-site Proton donor is His-264.

The protein belongs to the LpxC family. Requires Zn(2+) as cofactor.

It carries out the reaction a UDP-3-O-[(3R)-3-hydroxyacyl]-N-acetyl-alpha-D-glucosamine + H2O = a UDP-3-O-[(3R)-3-hydroxyacyl]-alpha-D-glucosamine + acetate. It functions in the pathway glycolipid biosynthesis; lipid IV(A) biosynthesis; lipid IV(A) from (3R)-3-hydroxytetradecanoyl-[acyl-carrier-protein] and UDP-N-acetyl-alpha-D-glucosamine: step 2/6. Its function is as follows. Catalyzes the hydrolysis of UDP-3-O-myristoyl-N-acetylglucosamine to form UDP-3-O-myristoylglucosamine and acetate, the committed step in lipid A biosynthesis. The polypeptide is UDP-3-O-acyl-N-acetylglucosamine deacetylase (Pseudomonas putida (strain GB-1)).